A 700-amino-acid chain; its full sequence is Myb-related protein B (700 aa).

HTH myb-type domains lie at 26–77, 78–133, and 134–184; these read RDSK…LRVL, NPDL…NPEV, and KKSC…KRKV. Positions 54–77 form a DNA-binding region, H-T-H motif; it reads WKFLASHFPNRTDQQCQYRWLRVL. K104 participates in a covalent cross-link: Glycyl lysine isopeptide (Lys-Gly) (interchain with G-Cter in SUMO2). 2 DNA-binding regions (H-T-H motif) span residues 106 to 129 and 157 to 180; these read WTLI…HNHL and WAEI…NSTI. Residues K194 and K197 each participate in a glycyl lysine isopeptide (Lys-Gly) (interchain with G-Cter in SUMO2) cross-link. Disordered stretches follow at residues 212–287 and 391–412; these read LQSA…PETS and PISP…VLKR. Residues 213–229 are compositionally biased toward polar residues; sequence QSAQPTEGQGSLLTNWP. S241 carries the post-translational modification Phosphoserine. Residue T266 is modified to Phosphothreonine. A Glycyl lysine isopeptide (Lys-Gly) (interchain with G-Cter in SUMO2) cross-link involves residue K275. S282 and S393 each carry phosphoserine. K411 participates in a covalent cross-link: Glycyl lysine isopeptide (Lys-Gly) (interchain with G-Cter in SUMO2). The short motif at 411–417 is the Nuclear localization signal element; it reads KRQRKRR. T440 and T444 each carry phosphothreonine; by CDK2. Glycyl lysine isopeptide (Lys-Gly) (interchain with G-Cter in SUMO2) cross-links involve residues K447 and K482. 2 positions are modified to phosphothreonine; by CDK2: T487 and T494. K499 is covalently cross-linked (Glycyl lysine isopeptide (Lys-Gly) (interchain with G-Cter in SUMO2)). T505 is subject to Phosphothreonine. A Glycyl lysine isopeptide (Lys-Gly) (interchain with G-Cter in SUMO2) cross-link involves residue K509. T520 bears the Phosphothreonine; by CDK2 mark. Glycyl lysine isopeptide (Lys-Gly) (interchain with G-Cter in SUMO2) cross-links involve residues K523, K533, and K546. The Bipartite nuclear localization signal signature appears at 564 to 584; sequence RPEKQKRKPGLRRSPIKKVRK. Position 577 is a phosphoserine; by CDK2 (S577). Glycyl lysine isopeptide (Lys-Gly) (interchain with G-Cter in SUMO2) cross-links involve residues K584, K596, K625, K639, and K648.

Component of the DREAM complex (also named LINC complex) at least composed of E2F4, E2F5, LIN9, LIN37, LIN52, LIN54, MYBL1, MYBL2, RBL1, RBL2, RBBP4, TFDP1 and TFDP2. The complex exists in quiescent cells where it represses cell cycle-dependent genes. It dissociates in S phase when LIN9, LIN37, LIN52 and LIN54 form a subcomplex that binds to MYBL22. Interacts with CCNF (via the Cyclin N-terminal domain). Post-translationally, phosphorylated by cyclin A/CDK2 during S-phase. Phosphorylation at Thr-520 is probably involved in transcriptional activity.

The protein resides in the nucleus. Its function is as follows. Transcription factor involved in the regulation of cell survival, proliferation, and differentiation. Transactivates the expression of the CLU gene. In Homo sapiens (Human), this protein is Myb-related protein B (MYBL2).